The following is a 214-amino-acid chain: Adenylate kinase (214 aa).

10 to 15 (GAGKGT) contributes to the ATP binding site. The interval 30-59 (STGDMLRAAVKSGSELGKQAKDIMDAGKLV) is NMP. Residues threonine 31, arginine 36, 57-59 (KLV), 85-88 (GFPR), and glutamine 92 each bind AMP. The interval 122–159 (GRRVHAPSGRVYHVKFNPPKVEGKDDVTGEELTTRKDD) is LID. Residues arginine 123 and 132-133 (VY) contribute to the ATP site. Residues arginine 156 and arginine 167 each coordinate AMP. The residue at position 192 (lysine 192) is an N6-acetyllysine. ATP is bound at residue lysine 200.

It belongs to the adenylate kinase family. As to quaternary structure, monomer.

It is found in the cytoplasm. The catalysed reaction is AMP + ATP = 2 ADP. The protein operates within purine metabolism; AMP biosynthesis via salvage pathway; AMP from ADP: step 1/1. Catalyzes the reversible transfer of the terminal phosphate group between ATP and AMP. Plays an important role in cellular energy homeostasis and in adenine nucleotide metabolism. The chain is Adenylate kinase from Escherichia coli O8 (strain IAI1).